The chain runs to 123 residues: uncharacterized protein (123 aa).

The next 2 membrane-spanning stretches (helical) occupy residues 55–77 and 92–114; these read LLIH…STIL and FFIN…TIVY.

It is found in the cell membrane. This is an uncharacterized protein from Pasteurella multocida (strain Pm70).